The following is a 157-amino-acid chain: uncharacterized protein (157 aa).

The protein belongs to the MG067/MG068/MG395 family.

This is an uncharacterized protein from Mycoplasma pneumoniae (strain ATCC 29342 / M129 / Subtype 1) (Mycoplasmoides pneumoniae).